A 134-amino-acid chain; its full sequence is Profilin-3 (134 aa).

An intrachain disulfide couples cysteine 13 to cysteine 118. The Involved in PIP2 interaction signature appears at 84-100 (AVIRGKKGSGGITIKKT). The residue at position 114 (threonine 114) is a Phosphothreonine.

The protein belongs to the profilin family. In terms of assembly, occurs in many kinds of cells as a complex with monomeric actin in a 1:1 ratio. Phosphorylated by MAP kinases.

The protein resides in the cytoplasm. Its subcellular location is the cytoskeleton. Functionally, binds to actin and affects the structure of the cytoskeleton. At high concentrations, profilin prevents the polymerization of actin, whereas it enhances it at low concentrations. By binding to PIP2, it inhibits the formation of IP3 and DG. This chain is Profilin-3 (PRO3), found in Olea europaea (Common olive).